The sequence spans 96 residues: (4S)-4-hydroxy-5-phosphonooxypentane-2,3-dione isomerase (96 aa).

An ABM domain is found at 2 to 91 (HVTLVEINVK…MTGPRKKTVF (90 aa)).

This sequence belongs to the LsrG family. Homodimer.

The protein resides in the cytoplasm. The catalysed reaction is (2S)-2-hydroxy-3,4-dioxopentyl phosphate = 3-hydroxy-2,4-dioxopentyl phosphate. In terms of biological role, involved in the degradation of phospho-AI-2, thereby terminating induction of the lsr operon and closing the AI-2 signaling cycle. Catalyzes the conversion of (4S)-4-hydroxy-5-phosphonooxypentane-2,3-dione (P-DPD) to 3-hydroxy-5-phosphonooxypentane-2,4-dione (P-HPD). The sequence is that of (4S)-4-hydroxy-5-phosphonooxypentane-2,3-dione isomerase from Yersinia pseudotuberculosis serotype O:1b (strain IP 31758).